Here is a 671-residue protein sequence, read N- to C-terminus: Solute carrier family 5 member 4 (671 aa).

At 1-38 the chain is on the cytoplasmic side; that stretch reads MPAMGTALPRAMASTASVSTSTGSSELSSLSDNINNPA. Residues 39 to 59 traverse the membrane as a helical segment; that stretch reads DISVIVIYFVVVMAVGVWAMV. The Extracellular segment spans residues 60–65; that stretch reads KTNRST. Residues 66–86 traverse the membrane as a helical segment; it reads VGGFFLAGRSMTWWPMGASLF. The Cytoplasmic segment spans residues 87 to 89; that stretch reads ASN. A helical transmembrane segment spans residues 90–110; the sequence is IGSGHFVGLAGTGAATGIAVT. Over 111–116 the chain is Extracellular; it reads AFESHS. A helical membrane pass occupies residues 117-137; that stretch reads FALLLVLGWFFVPIYIKAGVM. At 138–159 the chain is on the cytoplasmic side; that stretch reads TMPEYLRKRFGGKRLQIYLSVL. The helical transmembrane segment at 160–180 threads the bilayer; it reads SLFICVILTISADIFSGAIFI. A topological domain (extracellular) is located at residue Lys181. The helical transmembrane segment at 182 to 202 threads the bilayer; sequence LALGLDLYLAIFILLAITAVF. The Cytoplasmic segment spans residues 203 to 218; the sequence is TITGGLASVIYTDTLQ. The helical transmembrane segment at 219-239 threads the bilayer; it reads AIIMLVGSFILMIYAFVEVGG. Over 240–288 the chain is Extracellular; the sequence is YESFTEKYMNAIPSVVEGDNLTISPKCYTPQPDSFHIFRDAVTGDIPWP. Residues 289–309 form a helical membrane-spanning segment; that stretch reads GTAFGMPITALWYWCINQVIV. Topologically, residues 310-324 are cytoplasmic; it reads QRCLCGKNMSHVKAA. Residues 325 to 345 traverse the membrane as a helical segment; sequence CIVCGYLKLLPIFFMVMPGMI. The Extracellular segment spans residues 346–378; the sequence is SRILYTDMVACVVPSECVKQCGVDVGCTNYAYP. The chain crosses the membrane as a helical span at residues 379-399; it reads MLVLKLMPMGLRGLMLSVMLA. The Cytoplasmic portion of the chain corresponds to 400-434; it reads SLMSSLTSIFNSASTLFTMDLYTKIRKKASERELL. Residues 435–455 form a helical membrane-spanning segment; the sequence is IAGRLFVSVLIVTSILWVPIV. The Extracellular segment spans residues 456–467; sequence EVSQGGQLIHYT. Residues 468 to 488 form a helical membrane-spanning segment; sequence EAISSYLGPPIAAVFLVAIFC. Topologically, residues 489-494 are cytoplasmic; that stretch reads KRVNEQ. Residues 495–515 form a helical membrane-spanning segment; that stretch reads GAFWGLMVGLVLGLIRMIAEF. The Extracellular segment spans residues 516–537; that stretch reads SYGTGSCLAPSSCPKVICGVHY. A helical transmembrane segment spans residues 538–558; it reads LYYAIILFFVSILVILGVSYL. Over 559-650 the chain is Cytoplasmic; it reads TKPIPDVHLY…DTSEKPFWRT (92 aa). Over residues 583–593 the composition is skewed to acidic residues; that stretch reads DLDAEDREENE. A disordered region spans residues 583–604; that stretch reads DLDAEDREENEADARTEEDQTE. The segment covering 594–604 has biased composition (basic and acidic residues); it reads ADARTEEDQTE. The helical transmembrane segment at 651-671 threads the bilayer; that stretch reads VVNVNVIVLLAVAAFFYGYFA.

It belongs to the sodium:solute symporter (SSF) (TC 2.A.21) family.

Its subcellular location is the cell membrane. Generates D-glucose-induced depolarization in a pH-dependent and Na(+)-independent manner, with activity in acidic conditions (pH 5) but not neutral conditions. The protein is Solute carrier family 5 member 4 of Rattus norvegicus (Rat).